Here is a 231-residue protein sequence, read N- to C-terminus: Tegument protein UL51 homolog (231 aa).

A lipid anchor (S-palmitoyl cysteine; by host) is attached at cysteine 12.

Belongs to the herpesviridae UL51 family. Oligomerizes. Interacts with U75; this interaction mediates U75 incorporation to virions. In terms of processing, phosphorylated. Palmitoylation is necessary for Golgi localization.

It localises to the virion tegument. Its subcellular location is the host cytoplasm. It is found in the host Golgi apparatus. Its function is as follows. Plays several roles during the time course of infection, including egress of virus particles from the perinuclear space and secondary envelopment of cytoplasmic capsids that bud into specific trans-Golgi network (TGN)-derived membranes. The chain is Tegument protein UL51 homolog (U44) from Human herpesvirus 6B (strain Z29) (HHV-6 variant B).